The primary structure comprises 117 residues: Small ribosomal subunit protein bS6m (117 aa).

The protein belongs to the bacterial ribosomal protein bS6 family. Component of the mitochondrial small ribosomal subunit (mt-SSU). Mature N.crassa 74S mitochondrial ribosomes consist of a small (37S) and a large (54S) subunit. The 37S small subunit contains a 16S ribosomal RNA (16S mt-rRNA) and 32 different proteins. The 54S large subunit contains a 23S rRNA (23S mt-rRNA) and 42 different proteins.

Its subcellular location is the mitochondrion. In terms of biological role, component of the mitochondrial ribosome (mitoribosome), a dedicated translation machinery responsible for the synthesis of mitochondrial genome-encoded proteins, including at least some of the essential transmembrane subunits of the mitochondrial respiratory chain. The mitoribosomes are attached to the mitochondrial inner membrane and translation products are cotranslationally integrated into the membrane. The protein is Small ribosomal subunit protein bS6m (mrp17) of Neurospora crassa (strain ATCC 24698 / 74-OR23-1A / CBS 708.71 / DSM 1257 / FGSC 987).